The chain runs to 125 residues: Snaclec botrocetin subunit beta (125 aa).

Cystine bridges form between Cys-2–Cys-13, Cys-30–Cys-121, and Cys-98–Cys-113. Residues 9-122 (YEGHCYRFFK…CTRFKNFVCE (114 aa)) enclose the C-type lectin domain.

It belongs to the snaclec family. As to quaternary structure, heterodimer of subunits alpha and beta; disulfide-linked. Botrocetin and vWF form a soluble complex. Expressed by the venom gland.

Its subcellular location is the secreted. Functionally, snaclec that binds to von Willebrand factor (VWF) and induces its interaction with GPIbalpha (GP1BA) (via the vWF A1 domain), resulting in platelet aggregation. This chain is Snaclec botrocetin subunit beta, found in Bothrops jararaca (Jararaca).